Consider the following 587-residue polypeptide: Glutamine--tRNA ligase (587 aa).

Residues 58-68 (PEPNGYLHIGH) carry the 'HIGH' region motif. Residues 59–61 (EPN) and 65–71 (HIGHAKS) each bind ATP. L-glutamine contacts are provided by Asp-91 and Tyr-240. Residues Thr-259 and 294–295 (RL) each bind ATP. Residues 301 to 305 (VTSKR) carry the 'KMSKS' region motif.

The protein belongs to the class-I aminoacyl-tRNA synthetase family. Monomer.

The protein localises to the cytoplasm. It catalyses the reaction tRNA(Gln) + L-glutamine + ATP = L-glutaminyl-tRNA(Gln) + AMP + diphosphate. The polypeptide is Glutamine--tRNA ligase (Bordetella pertussis (strain Tohama I / ATCC BAA-589 / NCTC 13251)).